The primary structure comprises 961 residues: General vesicular transport factor p115 (961 aa).

The interval 1–641 (MNFLRGVMGG…SEEDKKEEEV (641 aa)) is globular head. ARM repeat units follow at residues 20–60 (AETI…VGIQ), 61–121 (AMEH…IKQQ), 123–163 (NVTL…IILV), 166–207 (MGVS…VAFE), 208–253 (NAFE…FKEG), 255–310 (YIQR…MFQC), 311–354 (GLLQ…FASV), 363–408 (PAIV…STLL), 420–459 (SAGQ…EQLL), 473–513 (SLLQ…THFL), 518–571 (NVPF…IEKR), and 573–630 (GKEN…AIYK). Ser-50 carries the post-translational modification Phosphoserine. Lys-202 is modified (N6-acetyllysine). Residues 642-929 (KKTLEQHDSI…FSLKNKLKEL (288 aa)) are a coiled coil. The span at 764-782 (KSSQLSPGTNEQSSATAGD) shows a compositional bias: polar residues. Disordered stretches follow at residues 764-784 (KSSQ…GDSE) and 929-961 (LGHP…QGHI). Positions 934–955 (EEEDELESGDQDDEDDEDEDDG) are enriched in acidic residues. Ser-941 bears the Phosphoserine mark.

The protein belongs to the VDP/USO1/EDE1 family. Homodimer. Dimerizes by parallel association of the tails, resulting in an elongated structure with two globular head domains side by side, and a long rod-like tail structure. Interacts with MIF. Post-translationally, phosphorylated in a cell cycle-specific manner; phosphorylated in interphase but not in mitotic cells. Dephosphorylated protein associates with the Golgi membrane; phosphorylation promotes dissociation.

It localises to the cytoplasm. The protein resides in the cytosol. Its subcellular location is the golgi apparatus membrane. Functionally, general vesicular transport factor required for intercisternal transport in the Golgi stack; it is required for transcytotic fusion and/or subsequent binding of the vesicles to the target membrane. May well act as a vesicular anchor by interacting with the target membrane and holding the vesicular and target membranes in proximity. The polypeptide is General vesicular transport factor p115 (USO1) (Bos taurus (Bovine)).